We begin with the raw amino-acid sequence, 403 residues long: Phosphopentomutase (403 aa).

Mn(2+)-binding residues include aspartate 13, aspartate 298, histidine 303, aspartate 339, histidine 340, and histidine 351.

Belongs to the phosphopentomutase family. It depends on Mn(2+) as a cofactor.

Its subcellular location is the cytoplasm. The catalysed reaction is 2-deoxy-alpha-D-ribose 1-phosphate = 2-deoxy-D-ribose 5-phosphate. The enzyme catalyses alpha-D-ribose 1-phosphate = D-ribose 5-phosphate. It functions in the pathway carbohydrate degradation; 2-deoxy-D-ribose 1-phosphate degradation; D-glyceraldehyde 3-phosphate and acetaldehyde from 2-deoxy-alpha-D-ribose 1-phosphate: step 1/2. In terms of biological role, isomerase that catalyzes the conversion of deoxy-ribose 1-phosphate (dRib-1-P) and ribose 1-phosphate (Rib-1-P) to deoxy-ribose 5-phosphate (dRib-5-P) and ribose 5-phosphate (Rib-5-P), respectively. The chain is Phosphopentomutase from Streptococcus pneumoniae (strain Hungary19A-6).